The primary structure comprises 384 residues: GTPase Obg (384 aa).

Residues 1-159 (MKFIDEAKIE…RSLQLELKVL (159 aa)) form the Obg domain. The tract at residues 20–46 (ATSFRREKFVPRGGPDGGDGGKGGSVW) is disordered. The segment covering 33–43 (GPDGGDGGKGG) has biased composition (gly residues). The 189-residue stretch at 160 to 348 (ADVGLLGMPN…LVHQINQYLT (189 aa)) folds into the OBG-type G domain. Residues 166–173 (GMPNAGKS), 191–195 (FTTLH), 213–216 (DIPG), 284–287 (NKLD), and 329–331 (SAL) each bind GTP. Residues S173 and T193 each contribute to the Mg(2+) site.

The protein belongs to the TRAFAC class OBG-HflX-like GTPase superfamily. OBG GTPase family. As to quaternary structure, monomer. Mg(2+) serves as cofactor.

It is found in the cytoplasm. Functionally, an essential GTPase which binds GTP, GDP and possibly (p)ppGpp with moderate affinity, with high nucleotide exchange rates and a fairly low GTP hydrolysis rate. Plays a role in control of the cell cycle, stress response, ribosome biogenesis and in those bacteria that undergo differentiation, in morphogenesis control. The sequence is that of GTPase Obg from Neisseria meningitidis serogroup B (strain ATCC BAA-335 / MC58).